A 434-amino-acid chain; its full sequence is Histidinol dehydrogenase (434 aa).

Positions 130, 192, and 215 each coordinate NAD(+). Substrate is bound by residues Ser238, Gln260, and His263. 2 residues coordinate Zn(2+): Gln260 and His263. Catalysis depends on proton acceptor residues Glu328 and His329. His329, Asp362, Glu416, and His421 together coordinate substrate. Asp362 lines the Zn(2+) pocket. His421 is a Zn(2+) binding site.

Belongs to the histidinol dehydrogenase family. It depends on Zn(2+) as a cofactor.

It carries out the reaction L-histidinol + 2 NAD(+) + H2O = L-histidine + 2 NADH + 3 H(+). It participates in amino-acid biosynthesis; L-histidine biosynthesis; L-histidine from 5-phospho-alpha-D-ribose 1-diphosphate: step 9/9. In terms of biological role, catalyzes the sequential NAD-dependent oxidations of L-histidinol to L-histidinaldehyde and then to L-histidine. This Synechococcus sp. (strain ATCC 27144 / PCC 6301 / SAUG 1402/1) (Anacystis nidulans) protein is Histidinol dehydrogenase.